Reading from the N-terminus, the 174-residue chain is NADH-quinone oxidoreductase subunit B (174 aa).

[4Fe-4S] cluster contacts are provided by C51, C52, C116, and C146.

This sequence belongs to the complex I 20 kDa subunit family. NDH-1 is composed of 14 different subunits. Subunits NuoB, C, D, E, F, and G constitute the peripheral sector of the complex. The cofactor is [4Fe-4S] cluster.

Its subcellular location is the cell inner membrane. It carries out the reaction a quinone + NADH + 5 H(+)(in) = a quinol + NAD(+) + 4 H(+)(out). NDH-1 shuttles electrons from NADH, via FMN and iron-sulfur (Fe-S) centers, to quinones in the respiratory chain. The immediate electron acceptor for the enzyme in this species is believed to be ubiquinone. Couples the redox reaction to proton translocation (for every two electrons transferred, four hydrogen ions are translocated across the cytoplasmic membrane), and thus conserves the redox energy in a proton gradient. In Anaplasma phagocytophilum (strain HZ), this protein is NADH-quinone oxidoreductase subunit B.